The chain runs to 370 residues: Protein-glutamate methylesterase/protein-glutamine glutaminase 3 (370 aa).

Residues 3–119 (KVLIVDDSAL…SLNVSRIERE (117 aa)) form the Response regulatory domain. At D53 the chain carries 4-aspartylphosphate. The CheB-type methylesterase domain maps to 166–360 (SLTEIGVVLI…GQLNAWMSRT (195 aa)). Catalysis depends on residues S178, H205, and D302.

Belongs to the CheB family. Phosphorylated by CheA. Phosphorylation of the N-terminal regulatory domain activates the methylesterase activity.

It is found in the cytoplasm. It carries out the reaction [protein]-L-glutamate 5-O-methyl ester + H2O = L-glutamyl-[protein] + methanol + H(+). The catalysed reaction is L-glutaminyl-[protein] + H2O = L-glutamyl-[protein] + NH4(+). In terms of biological role, involved in chemotaxis. Part of a chemotaxis signal transduction system that modulates chemotaxis in response to various stimuli. Catalyzes the demethylation of specific methylglutamate residues introduced into the chemoreceptors (methyl-accepting chemotaxis proteins or MCP) by CheR. Also mediates the irreversible deamidation of specific glutamine residues to glutamic acid. The polypeptide is Protein-glutamate methylesterase/protein-glutamine glutaminase 3 (Rhodospirillum rubrum (strain ATCC 11170 / ATH 1.1.1 / DSM 467 / LMG 4362 / NCIMB 8255 / S1)).